The sequence spans 302 residues: Sulfate adenylyltransferase subunit 2 (302 aa).

Positions R280–F302 are disordered.

Belongs to the PAPS reductase family. CysD subfamily. As to quaternary structure, heterodimer composed of CysD, the smaller subunit, and CysN.

The catalysed reaction is sulfate + ATP + H(+) = adenosine 5'-phosphosulfate + diphosphate. It participates in sulfur metabolism; hydrogen sulfide biosynthesis; sulfite from sulfate: step 1/3. In terms of biological role, with CysN forms the ATP sulfurylase (ATPS) that catalyzes the adenylation of sulfate producing adenosine 5'-phosphosulfate (APS) and diphosphate, the first enzymatic step in sulfur assimilation pathway. APS synthesis involves the formation of a high-energy phosphoric-sulfuric acid anhydride bond driven by GTP hydrolysis by CysN coupled to ATP hydrolysis by CysD. This is Sulfate adenylyltransferase subunit 2 from Shewanella sp. (strain ANA-3).